The following is a 567-amino-acid chain: Malate synthase, glyoxysomal (567 aa).

Arginine 182 (proton acceptor) is an active-site residue. Aspartate 468 serves as the catalytic Proton donor. A Microbody targeting signal motif is present at residues 565–567 (SRL).

It belongs to the malate synthase family.

It is found in the glyoxysome. It carries out the reaction glyoxylate + acetyl-CoA + H2O = (S)-malate + CoA + H(+). It participates in carbohydrate metabolism; glyoxylate cycle; (S)-malate from isocitrate: step 2/2. The protein is Malate synthase, glyoxysomal of Ricinus communis (Castor bean).